Here is a 262-residue protein sequence, read N- to C-terminus: Spindlin-Z (262 aa).

A disordered region spans residues 1–50; the sequence is MKTPFGKSPGQRSRADAGHAGVSASMMKKRTSHKKHRNNVGPSKPISQPR. Residues 27–38 show a composition bias toward basic residues; it reads MKKRTSHKKHRN.

Belongs to the SPIN/STSY family. Expressed in several tissues including testis.

It is found in the nucleus. Functionally, may play a role in mitosis. The sequence is that of Spindlin-Z (SPINZ) from Gallus gallus (Chicken).